Consider the following 339-residue polypeptide: Dihydroorotate dehydrogenase (quinone) (339 aa).

FMN-binding positions include 62–66 and threonine 86; that span reads AGMDK. Lysine 66 provides a ligand contact to substrate. 111 to 115 is a binding site for substrate; that stretch reads NRMGF. Positions 139 and 172 each coordinate FMN. Asparagine 172 is a binding site for substrate. Serine 175 serves as the catalytic Nucleophile. Position 177 (asparagine 177) interacts with substrate. FMN contacts are provided by lysine 217 and threonine 245. 246–247 lines the substrate pocket; sequence NT. Residues glycine 268, glycine 297, and 318 to 319 contribute to the FMN site; that span reads YS.

It belongs to the dihydroorotate dehydrogenase family. Type 2 subfamily. Monomer. Requires FMN as cofactor.

Its subcellular location is the cell membrane. The catalysed reaction is (S)-dihydroorotate + a quinone = orotate + a quinol. Its pathway is pyrimidine metabolism; UMP biosynthesis via de novo pathway; orotate from (S)-dihydroorotate (quinone route): step 1/1. Its function is as follows. Catalyzes the conversion of dihydroorotate to orotate with quinone as electron acceptor. In Shewanella putrefaciens (strain CN-32 / ATCC BAA-453), this protein is Dihydroorotate dehydrogenase (quinone).